A 284-amino-acid chain; its full sequence is Protein pxr1 (284 aa).

The 47-residue stretch at 25–71 (TNRLGFKLLSSYGWVNGNGLGEKQHGRIHNIKVSLKDDTLGIGAKAT) folds into the G-patch domain. The tract at residues 149–253 (DEDRVCEDAS…KVKEGNRPAS (105 aa)) is disordered. Phosphoserine occurs at positions 159 and 160. Composition is skewed to basic residues over residues 166–181 (EKRK…KKKT) and 196–206 (TKKKKKEHKKK). Composition is skewed to basic and acidic residues over residues 207–224 (DKES…DKEE) and 233–249 (KDKP…KEGN).

It belongs to the PINX1 family.

It localises to the nucleus. The protein localises to the nucleolus. Its function is as follows. Involved in rRNA-processing at A0, A1 and A2 sites and negatively regulates telomerase. The polypeptide is Protein pxr1 (pxr1) (Schizosaccharomyces pombe (strain 972 / ATCC 24843) (Fission yeast)).